A 250-amino-acid chain; its full sequence is Probable transcriptional regulatory protein DIP1378 (250 aa).

A disordered region spans residues M1–G22.

Belongs to the TACO1 family.

It localises to the cytoplasm. This chain is Probable transcriptional regulatory protein DIP1378, found in Corynebacterium diphtheriae (strain ATCC 700971 / NCTC 13129 / Biotype gravis).